The sequence spans 131 residues: Small ribosomal subunit protein uS11 (131 aa).

Belongs to the universal ribosomal protein uS11 family. Part of the 30S ribosomal subunit. Interacts with proteins S7 and S18. Binds to IF-3.

Its function is as follows. Located on the platform of the 30S subunit, it bridges several disparate RNA helices of the 16S rRNA. Forms part of the Shine-Dalgarno cleft in the 70S ribosome. This chain is Small ribosomal subunit protein uS11, found in Deinococcus deserti (strain DSM 17065 / CIP 109153 / LMG 22923 / VCD115).